A 485-amino-acid chain; its full sequence is Glutamyl-tRNA(Gln) amidotransferase subunit A (485 aa).

Active-site charge relay system residues include lysine 79 and serine 154. The Acyl-ester intermediate role is filled by serine 178.

The protein belongs to the amidase family. GatA subfamily. In terms of assembly, heterotrimer of A, B and C subunits.

It carries out the reaction L-glutamyl-tRNA(Gln) + L-glutamine + ATP + H2O = L-glutaminyl-tRNA(Gln) + L-glutamate + ADP + phosphate + H(+). Functionally, allows the formation of correctly charged Gln-tRNA(Gln) through the transamidation of misacylated Glu-tRNA(Gln) in organisms which lack glutaminyl-tRNA synthetase. The reaction takes place in the presence of glutamine and ATP through an activated gamma-phospho-Glu-tRNA(Gln). This Clostridium novyi (strain NT) protein is Glutamyl-tRNA(Gln) amidotransferase subunit A.